The following is a 493-amino-acid chain: UDP-N-acetylmuramoylalanine--D-glutamate ligase (493 aa).

An ATP-binding site is contributed by 126 to 132; the sequence is GTNGKTT.

This sequence belongs to the MurCDEF family.

It is found in the cytoplasm. The catalysed reaction is UDP-N-acetyl-alpha-D-muramoyl-L-alanine + D-glutamate + ATP = UDP-N-acetyl-alpha-D-muramoyl-L-alanyl-D-glutamate + ADP + phosphate + H(+). It functions in the pathway cell wall biogenesis; peptidoglycan biosynthesis. Functionally, cell wall formation. Catalyzes the addition of glutamate to the nucleotide precursor UDP-N-acetylmuramoyl-L-alanine (UMA). In Mycolicibacterium smegmatis (strain ATCC 700084 / mc(2)155) (Mycobacterium smegmatis), this protein is UDP-N-acetylmuramoylalanine--D-glutamate ligase.